The chain runs to 148 residues: MKIFVDGDGSPVKETVIEVAVEKALDVVIVTSVDHYSLKDYPENVSFVYVDKGADAADFKIVQLIKKGDLLITQDYGLASLVLPKGVLVLHQLGYQYTKENIDGLLEQRYFSGQIRRKGGRTKGPKPFTDQDRTTFKQALIELVKRSL.

Belongs to the UPF0178 family.

In Enterococcus faecalis (strain ATCC 700802 / V583), this protein is UPF0178 protein EF_0842.